The following is a 422-amino-acid chain: Gamma-glutamyl phosphate reductase (422 aa).

The protein belongs to the gamma-glutamyl phosphate reductase family.

It is found in the cytoplasm. It carries out the reaction L-glutamate 5-semialdehyde + phosphate + NADP(+) = L-glutamyl 5-phosphate + NADPH + H(+). It participates in amino-acid biosynthesis; L-proline biosynthesis; L-glutamate 5-semialdehyde from L-glutamate: step 2/2. Its function is as follows. Catalyzes the NADPH-dependent reduction of L-glutamate 5-phosphate into L-glutamate 5-semialdehyde and phosphate. The product spontaneously undergoes cyclization to form 1-pyrroline-5-carboxylate. The protein is Gamma-glutamyl phosphate reductase of Nitrosomonas eutropha (strain DSM 101675 / C91 / Nm57).